We begin with the raw amino-acid sequence, 852 residues long: Cytochrome P450 monooxygenase mpaDE (852 aa).

The Lumenal segment spans residues 1–6; sequence MDYLII. A helical membrane pass occupies residues 7–29; that stretch reads IRITAVAVVLYLTRYVCCLYLHL. Residues 30–852 are Cytoplasmic-facing; the sequence is QDVPGPLFAK…DLEDAMEGTK (823 aa). Cysteine 448 lines the heme pocket.

This sequence belongs to the cytochrome P450 family. Heme serves as cofactor.

The protein localises to the endoplasmic reticulum membrane. It carries out the reaction 5-methylorsellinate + reduced [NADPH--hemoprotein reductase] + O2 = 4,6-dihydroxy-2-(hydroxymethyl)-3-methylbenzoate + oxidized [NADPH--hemoprotein reductase] + H2O + H(+). It catalyses the reaction 4,6-dihydroxy-2-(hydroxymethyl)-3-methylbenzoate + H(+) = 5,7-dihydroxy-4-methylphthalide + H2O. It participates in secondary metabolite biosynthesis; terpenoid biosynthesis. In terms of biological role, cytochrome P450 monooxygenase; part of the gene cluster that mediates the biosynthesis of mycophenolic acid (MPA), the first isolated antibiotic natural product in the world obtained from a culture of Penicillium brevicompactum in 1893. MpaDE is an endoplasmic reticulum-bound enzyme that catalyzes the conversion of 5-methylorsellinic acid (5MOA) into the phthalide compound 5,7-dihydroxy-4,6-dimethylphthalide (DHMP). MpaDE first catalyzes hydroxylation of 5-MOA to 4,6-dihydroxy-2-(hydroxymethyl)-3-methylbenzoic acid (DHMB), and then acts as a lactone synthase that catalyzes the ring closure to convert DHMB into DHMP. The first step of the pathway is the synthesis of 5-methylorsellinic acid (5MOA) by the cytosolic polyketide synthase mpaC. 5MOA is then converted to the phthalide compound 5,7-dihydroxy-4,6-dimethylphthalide (DHMP) by the endoplasmic reticulum-bound cytochrome P450 monooxygenase mpaDE. MpaDE first catalyzes hydroxylation of 5-MOA to 4,6-dihydroxy-2-(hydroxymethyl)-3-methylbenzoic acid (DHMB). MpaDE then acts as a lactone synthase that catalyzes the ring closure to convert DHMB into DHMP. The next step is the prenylation of DHMP by the Golgi apparatus-associated prenyltransferase mpaA to yield farnesyl-DHMP (FDHMP). The ER-bound oxygenase mpaB then mediates the oxidative cleavage the C19-C20 double bond in FDHMP to yield FDHMP-3C via a mycophenolic aldehyde intermediate. The O-methyltransferase mpaG catalyzes the methylation of FDHMP-3C to yield MFDHMP-3C. After the cytosolic methylation of FDHMP-3C, MFDHMP-3C enters into peroxisomes probably via free diffusion due to its low molecular weight. Upon a peroxisomal CoA ligation reaction, catalyzed by a beta-oxidation component enzyme acyl-CoA ligase ACL891, MFDHMP-3C-CoA would then be restricted to peroxisomes for the following beta-oxidation pathway steps. The peroxisomal beta-oxidation machinery than converts MFDHMP-3C-CoA into MPA_CoA, via a beta-oxidation chain-shortening process. Finally mpaH acts as a peroxisomal acyl-CoA hydrolase with high substrate specificity toward MPA-CoA to release the final product MPA. This chain is Cytochrome P450 monooxygenase mpaDE, found in Penicillium roqueforti (strain FM164).